We begin with the raw amino-acid sequence, 117 residues long: Venom nerve growth factor (117 aa).

Disulfide bonds link cysteine 12–cysteine 77, cysteine 55–cysteine 105, and cysteine 65–cysteine 107. Residue asparagine 21 is glycosylated (N-linked (GlcNAc...) asparagine).

The protein belongs to the NGF-beta family. Homodimer; non-covalently linked. Expressed by the venom gland.

Its subcellular location is the secreted. In terms of biological role, nerve growth factor is important for the development and maintenance of the sympathetic and sensory nervous systems. It stimulates division and differentiation of sympathetic and embryonic sensory neurons as well as basal forebrain cholinergic neurons in the brain. Its relevance in the snake venom is not clear. However, it has been shown to inhibit metalloproteinase-dependent proteolysis of platelet glycoprotein Ib alpha, suggesting a metalloproteinase inhibition to prevent metalloprotease autodigestion and/or protection against prey proteases. Binds a lipid between the two protein chains in the homodimer. The lipid-bound form promotes histamine relase from mouse mast cells, contrary to the lipid-free form. This is Venom nerve growth factor from Daboia russelii (Russel's viper).